Consider the following 360-residue polypeptide: DNA polymerase IV (360 aa).

The region spanning 8 to 191 is the UmuC domain; it reads VLHVDMDSFF…LPVGRIPGIG (184 aa). 2 residues coordinate Mg(2+): Asp-12 and Asp-110. The active site involves Glu-111.

The protein belongs to the DNA polymerase type-Y family. Monomer. Mg(2+) is required as a cofactor.

It is found in the cytoplasm. The catalysed reaction is DNA(n) + a 2'-deoxyribonucleoside 5'-triphosphate = DNA(n+1) + diphosphate. Functionally, poorly processive, error-prone DNA polymerase involved in untargeted mutagenesis. Copies undamaged DNA at stalled replication forks, which arise in vivo from mismatched or misaligned primer ends. These misaligned primers can be extended by PolIV. Exhibits no 3'-5' exonuclease (proofreading) activity. May be involved in translesional synthesis. This Methanoculleus marisnigri (strain ATCC 35101 / DSM 1498 / JR1) protein is DNA polymerase IV.